Consider the following 482-residue polypeptide: Docking protein 1 (482 aa).

The residue at position 1 (M1) is an N-acetylmethionine. The PH domain maps to 4–119; the sequence is AVMEGPLFLQ…WVQTLCRTAF (116 aa). S48 is subject to Phosphoserine. Residues 151-259 form the IRS-type PTB domain; that stretch reads EGSQFWVTSQ…QQQKAQGKVG (109 aa). Residues S269 and S290 each carry the phosphoserine modification. The tract at residues 269-328 is disordered; that stretch reads SHDGETEGKTVPPPVPQDPLGSPPALYAEPLDSLRIPPGPSQDSVYSDPLGSTPAGAGEG. Phosphotyrosine is present on residues Y295, Y336, Y340, Y361, and Y376. Residues 353–373 are disordered; sequence TDSKEDPIYDEPEGLAPAPPR. Y397 carries the post-translational modification Phosphotyrosine; by INSR. Residues 398–482 are disordered; that stretch reads ELPYNPATDD…RAGVKSEGST (85 aa). At Y408 the chain carries Phosphotyrosine. Residues 410 to 423 show a composition bias toward pro residues; it reads VPPPRSPKPAPAPK. Phosphoserine is present on S415. Positions 432 to 459 are enriched in polar residues; sequence SGTTRGSGSKGFSSDTALYSQVQKSGTS. The residue at position 450 (Y450) is a Phosphotyrosine.

The protein belongs to the DOK family. Type A subfamily. In terms of assembly, interacts with RasGAP, INPP5D/SHIP1 and ABL1. Interacts directly with phosphorylated ITGB3. Interacts with SRMS (via the SH2 and SH3 domains). Constitutively tyrosine-phosphorylated. Phosphorylated by TEC. Phosphorylated on tyrosine residues by the insulin receptor kinase. Results in the negative regulation of the insulin signaling pathway. Phosphorylated by LYN. Phosphorylated on tyrosine residues by SRMS. In terms of tissue distribution, expressed in lung, spleen, skeletal muscle and kidney.

The protein resides in the cytoplasm. It localises to the nucleus. Its function is as follows. DOK proteins are enzymatically inert adaptor or scaffolding proteins. They provide a docking platform for the assembly of multimolecular signaling complexes. DOK1 appears to be a negative regulator of the insulin signaling pathway. Modulates integrin activation by competing with talin for the same binding site on ITGB3. In Mus musculus (Mouse), this protein is Docking protein 1 (Dok1).